The following is a 150-amino-acid chain: Large ribosomal subunit protein uL15 (150 aa).

Over residues 1–15 the composition is skewed to polar residues; that stretch reads MNLSNLQPAEGSTHN. Residues 1-52 are disordered; it reads MNLSNLQPAEGSTHNQNKRLGRGEGSGKGGTSARGHKGAKSRSGYSKKIGFE. Gly residues predominate over residues 23–32; it reads GEGSGKGGTS.

It belongs to the universal ribosomal protein uL15 family. In terms of assembly, part of the 50S ribosomal subunit.

In terms of biological role, binds to the 23S rRNA. The chain is Large ribosomal subunit protein uL15 from Flavobacterium psychrophilum (strain ATCC 49511 / DSM 21280 / CIP 103535 / JIP02/86).